The primary structure comprises 336 residues: 4-aminobenzoate N-oxygenase (336 aa).

Tyr93 is a 4-nitrobenzoate binding site. 4 residues coordinate Fe cation: Glu101, Glu136, His139, and Glu196. Asn200 lines the 4-nitrobenzoate pocket. Fe cation-binding residues include His223, Glu227, and His230.

It belongs to the AurF N-oxygenase family. Homodimer. The cofactor is Fe(2+).

It carries out the reaction 4-aminobenzoate + AH2 + 2 O2 = 4-nitrobenzoate + A + 2 H2O. Its pathway is antibiotic biosynthesis. Functionally, involved in the biosynthesis of the polyketide antibiotic aureothin. Catalyzes the oxidation of p-aminobenzoate (pABA) to p-nitrobenzoate (pNBA), an unusual polyketide synthase starter unit. Reaction mechanism involves the generation of a peroxodiiron(III/III) intermediate, which effects the initial oxidation of p-aminobenzoate to p-hydroxylaminobenzoate (Ar-NHOH). Ar-NHOH is then probably directly converted to the fully oxidized p-nitrobenzoate via a four-electron N-oxidation, bypassing the formation of a nitroso compound. This Streptomyces thioluteus protein is 4-aminobenzoate N-oxygenase.